Here is a 410-residue protein sequence, read N- to C-terminus: Peptidase T (410 aa).

Histidine 79 provides a ligand contact to Zn(2+). Residue aspartate 81 is part of the active site. Aspartate 142 contributes to the Zn(2+) binding site. Glutamate 176 functions as the Proton acceptor in the catalytic mechanism. 3 residues coordinate Zn(2+): glutamate 177, aspartate 199, and histidine 381.

The protein belongs to the peptidase M20B family. The cofactor is Zn(2+).

It is found in the cytoplasm. It carries out the reaction Release of the N-terminal residue from a tripeptide.. Its function is as follows. Cleaves the N-terminal amino acid of tripeptides. The polypeptide is Peptidase T (Bacillus thuringiensis subsp. konkukian (strain 97-27)).